A 138-amino-acid chain; its full sequence is ATP synthase epsilon chain (138 aa).

It belongs to the ATPase epsilon chain family. F-type ATPases have 2 components, CF(1) - the catalytic core - and CF(0) - the membrane proton channel. CF(1) has five subunits: alpha(3), beta(3), gamma(1), delta(1), epsilon(1). CF(0) has three main subunits: a, b and c.

The protein localises to the cell membrane. Functionally, produces ATP from ADP in the presence of a proton gradient across the membrane. In Polynucleobacter asymbioticus (strain DSM 18221 / CIP 109841 / QLW-P1DMWA-1) (Polynucleobacter necessarius subsp. asymbioticus), this protein is ATP synthase epsilon chain.